The following is a 414-amino-acid chain: MEDDAPVIYGLEFQARALTPQTAETDAIRFLVGTQSLKYDNQIHIIDFDDENNIINKNVLLHQVGEIWHISASPADRGVLATCYNRTFCCVLSLDSFGALGKSSAQLFIALATSSDSKVLTCAAVWRMPKELESGSHESPDDSSSTAQTLELLCHLDNTAHGNMACVVWEPMGDGKKIISLADNHILLWDLQESSSQAVLASSASLEGKGQLKFTSGRWSPHHNCTQVATANDTTLRGWDTRSMSQIYCIENAHGQLVRDLDFNPNKQYYLASCGDDCKVKFWDTRNVTEPVKTLEEHSHWVWNVRYNHSHDQLVLTGSSDSRVILSNMVSISSEPFGHLVDDDDISDQEDHRSEEKSKEPLQDNVIATYEEHEDSVYAVDWSSADPWLFASLSYDGRLVINRVPRALKYHILL.

M1 bears the N-acetylmethionine mark. WD repeat units lie at residues 159–199, 209–249, 253–293, and 297–337; these read TAHG…SQAV, KGQL…QIYC, AHGQ…EPVK, and EHSH…SEPF. The disordered stretch occupies residues 337-362; that stretch reads FGHLVDDDDISDQEDHRSEEKSKEPL. Phosphoserine is present on S347. Residues 349–362 are compositionally biased toward basic and acidic residues; that stretch reads QEDHRSEEKSKEPL. One copy of the WD 5 repeat lies at 372 to 412; the sequence is EHEDSVYAVDWSSADPWLFASLSYDGRLVINRVPRALKYHI.

This sequence belongs to the WD repeat EIPR1 family. In terms of assembly, interacts with two multisubunit tethering complexes: EARP composed of VPS50, VPS51, VPS52 and VPS53 subunits and GARP complex composed of VPS51, VPS52, VPS53 and VPS54 subunits. Interacts with SNAP29.

It is found in the golgi apparatus. Its subcellular location is the trans-Golgi network. Acts as a component of endosomal retrieval machinery that is involved in protein transport from early endosomes to either recycling endosomes or the trans-Golgi network. Mediates the recruitment of Golgi-associated retrograde protein (GARP) complex to the trans-Golgi network and controls early endosome-to-Golgi transport of internalized protein. Promotes the recycling of internalized transferrin receptor (TFRC) to the plasma membrane through interaction with endosome-associated recycling protein (EARP) complex. Controls proper insulin distribution and secretion, and retention of cargo in mature dense core vesicles. Required for the stability of the endosome-associated retrograde protein (EARP) complex subunits and for proper localization and association of EARP with membranes. In Pongo abelii (Sumatran orangutan), this protein is EARP and GARP complex-interacting protein 1.